Reading from the N-terminus, the 272-residue chain is Carbonic anhydrase (272 aa).

3 residues coordinate Zn(2+): C39, H98, and C101.

It belongs to the beta-class carbonic anhydrase family. A hexamer formed by a trimer of dimers. Purified from carboxysomes with the both RuBisCO subunits and the full-length form of CcmM, probably interacts with the N-terminus of CcmM. The cofactor is Zn(2+).

It is found in the carboxysome. The enzyme catalyses hydrogencarbonate + H(+) = CO2 + H2O. Reversible hydration of carbon dioxide. Essential to photosynthetic carbon dioxide fixation, supplies CO(2) to RuBisCO (ribulose bisphosphate carboxylase, rbcL-rbcS) in the carboxysome. Loss of activity results in limitation of CO(2) availability to RuBisCO located in the cytoplasm. This is Carbonic anhydrase from Synechococcus elongatus (strain ATCC 33912 / PCC 7942 / FACHB-805) (Anacystis nidulans R2).